A 785-amino-acid polypeptide reads, in one-letter code: Protein PHTF2 (785 aa).

Positions 46-191 (IQCLIGAYDQ…VHCQIVSTRT (146 aa)) constitute a PHTF domain. 2 helical membrane-spanning segments follow: residues 136–156 (VIFF…VLFC) and 164–184 (IPLT…TVHC). 2 disordered regions span residues 190–239 (RTPK…GTST) and 304–401 (RPEE…PESE). A compositionally biased stretch (basic residues) spans 200-209 (GKRRRKLRKA). Residues 210–219 (AHLEVHREGD) are compositionally biased toward basic and acidic residues. 2 stretches are compositionally biased toward polar residues: residues 220–239 (GSST…GTST) and 309–333 (AWNT…VSDE). The N-linked (GlcNAc...) asparagine glycan is linked to Asn-329. Over residues 359–369 (RNRKSHHYKKH) the composition is skewed to basic residues. Low complexity predominate over residues 378–390 (SGTSCSSRCSSSR). A compositionally biased stretch (basic and acidic residues) spans 391-400 (QDSESARPES). 4 consecutive transmembrane segments (helical) span residues 497–517 (IGYQ…PFVF), 553–573 (VIIS…LLCV), 634–654 (VIVS…CAQL), and 668–688 (WELV…VTLG). Residues Asn-697 and Asn-756 are each glycosylated (N-linked (GlcNAc...) asparagine). Residues 760 to 780 (VVILSAVSGVISDLLGFNLKL) traverse the membrane as a helical segment.

The protein localises to the membrane. In Homo sapiens (Human), this protein is Protein PHTF2 (PHTF2).